Reading from the N-terminus, the 310-residue chain is Protein LRATD2 (310 aa).

The interval 1 to 76 is disordered; that stretch reads MGNQVEKLTH…PPPQPQPYDP (76 aa). A compositionally biased stretch (gly residues) spans 54 to 64; it reads PDGGGLPDGGD. The span at 65–74 shows a compositional bias: pro residues; sequence GPPPPQPQPY. The LRAT domain occupies 122-217; the sequence is VEFVSQAQYP…CRYGKREFKI (96 aa). Residues 274–310 form a disordered region; it reads HPAEPEEGDSNVARTTPPPGRPPAPSSEEEDGEAVAH. Pro residues predominate over residues 289 to 298; sequence TPPPGRPPAP. Residues 300-310 show a composition bias toward acidic residues; it reads SEEEDGEAVAH.

Belongs to the LRATD family. Expressed in esophageal squamous cell carcinomas.

This Homo sapiens (Human) protein is Protein LRATD2.